Reading from the N-terminus, the 548-residue chain is Sesquiterpene synthase TPS1 (548 aa).

Arg264, Asp301, Asp305, Arg442, and Asp445 together coordinate (2E,6E)-farnesyl diphosphate. Mg(2+) is bound by residues Asp301 and Asp305. A DDXXD motif motif is present at residues 301 to 305 (DDTYD). Residues Asp445 and Glu453 each contribute to the Mg(2+) site.

The protein belongs to the terpene synthase family. Tpsa subfamily. As to quaternary structure, monomer. Mg(2+) serves as cofactor. In terms of tissue distribution, expressed in leaves and stems.

The protein localises to the cytoplasm. It catalyses the reaction (2E,6E)-farnesyl diphosphate = germacrene D + diphosphate. The catalysed reaction is (2E,6E)-farnesyl diphosphate = (-)-(E)-beta-caryophyllene + diphosphate. The enzyme catalyses (2E,6E)-farnesyl diphosphate = beta-copaene + diphosphate. It functions in the pathway secondary metabolite biosynthesis; terpenoid biosynthesis. Functionally, sesquiterpene synthase involved in the biosynthesis of volatile compounds. Mediates the conversion of (2E,6E)-farnesyl diphosphate (FPP) into germacrene D, (-)-(E)-beta-caryophyllene and beta-copaene. The protein is Sesquiterpene synthase TPS1 of Xanthium strumarium (Rough cocklebur).